Consider the following 258-residue polypeptide: UPF0246 protein ABO_1338 (258 aa).

The protein belongs to the UPF0246 family.

This is UPF0246 protein ABO_1338 from Alcanivorax borkumensis (strain ATCC 700651 / DSM 11573 / NCIMB 13689 / SK2).